A 308-amino-acid chain; its full sequence is MIDTSAIRGKLTPNRDLSELTWLRVGGPADWLFQPADIDDLQTFLRMLPADIAVFPMGVGSNLIVRDGGLRAVVIRLGRGFNAIDVAGDTVTAGAAALDAHVARKAADAGVDLTFLRTIPGSIGGAVRMNAGCYGSYTADVFRSAQVVLRSGELATLGAAELNFRYRQSDLPEGAVLVSASLQGVPGDPEALHARMQAQLDKRDQTQPTKERSAGSTFRNPAGFSSTGRADDTHELKAWKVIDEAGMRGARLGGAQMSEMHSNFLINTGGATAADLEGLGEEVRKKVYDTSGITLEWEIMRVGDPLDG.

Positions 24-187 (RVGGPADWLF…VSASLQGVPG (164 aa)) constitute an FAD-binding PCMH-type domain. Residue Arg167 is part of the active site. A disordered region spans residues 199 to 230 (QLDKRDQTQPTKERSAGSTFRNPAGFSSTGRA). Basic and acidic residues predominate over residues 200 to 213 (LDKRDQTQPTKERS). Residues 214-228 (AGSTFRNPAGFSSTG) are compositionally biased toward polar residues. Ser216 (proton donor) is an active-site residue. The active site involves Glu298.

Belongs to the MurB family. Requires FAD as cofactor.

Its subcellular location is the cytoplasm. It carries out the reaction UDP-N-acetyl-alpha-D-muramate + NADP(+) = UDP-N-acetyl-3-O-(1-carboxyvinyl)-alpha-D-glucosamine + NADPH + H(+). Its pathway is cell wall biogenesis; peptidoglycan biosynthesis. Its function is as follows. Cell wall formation. The chain is UDP-N-acetylenolpyruvoylglucosamine reductase from Ruegeria pomeroyi (strain ATCC 700808 / DSM 15171 / DSS-3) (Silicibacter pomeroyi).